The primary structure comprises 142 residues: uncharacterized protein (142 aa).

Positions 1-120 (MADKFDANDE…TILKWEKNMD (120 aa)) constitute an N-acetyltransferase domain.

This sequence belongs to the acetyltransferase family.

This is an uncharacterized protein from Streptococcus pyogenes serotype M1.